We begin with the raw amino-acid sequence, 1746 residues long: tRNA (32-2'-O)-methyltransferase regulator THADA (1746 aa).

The stretch at 1252–1286 forms a coiled coil; sequence EQALAEIRRIVVELKALQLRLKNTEAANTKLNTNV.

Belongs to the THADA family. As to quaternary structure, interacts with SERCA. As to expression, detected in the larval fat body, salivary glands and wing imaginal disks (at protein level).

The protein resides in the endoplasmic reticulum. Functionally, together with methyltransferase Trm7-32, methylates the 2'-O-ribose of nucleotides at position 32 of the anticodon loop of substrate tRNAs. Plays a key role in energy homeostasis by regulating the balance between energy storage and heat production. Functions by negatively regulating Ca(2+) signaling pathways that are involved in heat production and maintaining correct lipid storage in the fat body. Regulates Ca(2+) signaling pathways by reducing the activity of the calcium-transporting ATPase SERCA possibly by promoting uncoupling of SERCA ATP hydrolysis from calcium pumping. May also function in the nervous system to control feeding behavior. In Drosophila melanogaster (Fruit fly), this protein is tRNA (32-2'-O)-methyltransferase regulator THADA.